Reading from the N-terminus, the 447-residue chain is 3-phosphoshikimate 1-carboxyvinyltransferase (447 aa).

The 3-phosphoshikimate site is built by lysine 25, serine 26, and arginine 30. Lysine 25 contacts phosphoenolpyruvate. Residues glycine 96 and arginine 124 each coordinate phosphoenolpyruvate. The 3-phosphoshikimate site is built by serine 171, serine 172, glutamine 173, serine 203, aspartate 325, and lysine 352. Glutamine 173 is a phosphoenolpyruvate binding site. Aspartate 325 serves as the catalytic Proton acceptor. 3 residues coordinate phosphoenolpyruvate: arginine 356, arginine 400, and lysine 425.

Belongs to the EPSP synthase family. As to quaternary structure, monomer.

The protein resides in the cytoplasm. The enzyme catalyses 3-phosphoshikimate + phosphoenolpyruvate = 5-O-(1-carboxyvinyl)-3-phosphoshikimate + phosphate. It participates in metabolic intermediate biosynthesis; chorismate biosynthesis; chorismate from D-erythrose 4-phosphate and phosphoenolpyruvate: step 6/7. Its function is as follows. Catalyzes the transfer of the enolpyruvyl moiety of phosphoenolpyruvate (PEP) to the 5-hydroxyl of shikimate-3-phosphate (S3P) to produce enolpyruvyl shikimate-3-phosphate and inorganic phosphate. This chain is 3-phosphoshikimate 1-carboxyvinyltransferase, found in Bordetella petrii (strain ATCC BAA-461 / DSM 12804 / CCUG 43448).